A 451-amino-acid chain; its full sequence is Glycylpeptide N-tetradecanoyltransferase (451 aa).

Residues 177–179 and 185–189 contribute to the tetradecanoyl-CoA site; these read LCI and NKRLA. Leu451 acts as the Proton acceptor; via carboxylate in catalysis.

This sequence belongs to the NMT family. As to quaternary structure, monomer.

Its subcellular location is the cytoplasm. It catalyses the reaction N-terminal glycyl-[protein] + tetradecanoyl-CoA = N-tetradecanoylglycyl-[protein] + CoA + H(+). Its activity is regulated as follows. Competitively inhibited by SC-58272, a peptidomimetic derived from the N-terminal sequence of a natural substrate. Adds a myristoyl group to the N-terminal glycine residue of certain cellular proteins. Substrate specificity requires an N-terminal glycine in the nascent polypeptide substrates. Ser is present at position 5 in almost all known N-myristoyl proteins and Lys is commonly encountered at postion 6. Basic residues are preferred at positions 7 and 8. This Candida albicans (strain SC5314 / ATCC MYA-2876) (Yeast) protein is Glycylpeptide N-tetradecanoyltransferase (NMT1).